Reading from the N-terminus, the 463-residue chain is Increased DNA methylation 3 (463 aa).

Over residues 169-182 (NLDESRETEQDCSR) the composition is skewed to basic and acidic residues. Disordered stretches follow at residues 169-199 (NLDESRETEQDCSRNGDATANGVVTNEDYNS) and 300-347 (RRFK…TTGT). The span at 184–199 (GDATANGVVTNEDYNS) shows a compositional bias: polar residues. Basic residues predominate over residues 300-310 (RRFKNSSKKAT).

Interacts with MBD7 (via C-terminus), IDM1 and IDM2. Part of a complex made of MBD7, IDM1, IDM2 and IDM3.

The protein resides in the nucleus. Acts as an anti-silencing factor that prevents DNA hypermethylation and gene repression. The chain is Increased DNA methylation 3 from Arabidopsis thaliana (Mouse-ear cress).